A 106-amino-acid polypeptide reads, in one-letter code: UPF0060 membrane protein CHU_3331 (106 aa).

4 helical membrane passes run 5–25 (FYFI…WLHF), 31–51 (ALLL…LTKI), 59–79 (AYAV…YGIE), and 85–105 (IWDY…LFAP).

It belongs to the UPF0060 family.

Its subcellular location is the cell inner membrane. In Cytophaga hutchinsonii (strain ATCC 33406 / DSM 1761 / CIP 103989 / NBRC 15051 / NCIMB 9469 / D465), this protein is UPF0060 membrane protein CHU_3331.